Reading from the N-terminus, the 534-residue chain is Light-independent protochlorophyllide reductase subunit B (534 aa).

Asp-36 lines the [4Fe-4S] cluster pocket. The active-site Proton donor is the Asp-274. 409 to 410 (GL) serves as a coordination point for substrate. A disordered region spans residues 426-446 (DEAGPSHHGGKAVPASAPRAD).

Belongs to the ChlB/BchB/BchZ family. As to quaternary structure, protochlorophyllide reductase is composed of three subunits; BchL, BchN and BchB. Forms a heterotetramer of two BchB and two BchN subunits. The cofactor is [4Fe-4S] cluster.

It catalyses the reaction chlorophyllide a + oxidized 2[4Fe-4S]-[ferredoxin] + 2 ADP + 2 phosphate = protochlorophyllide a + reduced 2[4Fe-4S]-[ferredoxin] + 2 ATP + 2 H2O. It participates in porphyrin-containing compound metabolism; bacteriochlorophyll biosynthesis (light-independent). Functionally, component of the dark-operative protochlorophyllide reductase (DPOR) that uses Mg-ATP and reduced ferredoxin to reduce ring D of protochlorophyllide (Pchlide) to form chlorophyllide a (Chlide). This reaction is light-independent. The NB-protein (BchN-BchB) is the catalytic component of the complex. The sequence is that of Light-independent protochlorophyllide reductase subunit B from Cereibacter sphaeroides (strain ATCC 17029 / ATH 2.4.9) (Rhodobacter sphaeroides).